A 273-amino-acid polypeptide reads, in one-letter code: Diaminopimelate epimerase (273 aa).

Substrate is bound by residues N11 and N60. C69 acts as the Proton donor in catalysis. Substrate-binding positions include 70–71 (GN), N181, and 199–200 (ER). Residue C209 is the Proton acceptor of the active site. 210 to 211 (GT) contacts substrate.

Belongs to the diaminopimelate epimerase family. As to quaternary structure, homodimer.

The protein localises to the cytoplasm. The catalysed reaction is (2S,6S)-2,6-diaminopimelate = meso-2,6-diaminopimelate. It functions in the pathway amino-acid biosynthesis; L-lysine biosynthesis via DAP pathway; DL-2,6-diaminopimelate from LL-2,6-diaminopimelate: step 1/1. Its function is as follows. Catalyzes the stereoinversion of LL-2,6-diaminopimelate (L,L-DAP) to meso-diaminopimelate (meso-DAP), a precursor of L-lysine and an essential component of the bacterial peptidoglycan. The protein is Diaminopimelate epimerase of Helicobacter pylori (strain HPAG1).